The sequence spans 65 residues: Large ribosomal subunit protein bL33c (65 aa).

This sequence belongs to the bacterial ribosomal protein bL33 family.

Its subcellular location is the plastid. The protein localises to the chloroplast. The chain is Large ribosomal subunit protein bL33c (rpl33) from Marchantia polymorpha (Common liverwort).